The chain runs to 147 residues: Nucleoside diphosphate kinase (147 aa).

Lysine 9, arginine 85, threonine 91, arginine 102, and asparagine 112 together coordinate ATP. Residue histidine 115 is the Pros-phosphohistidine intermediate of the active site.

Belongs to the NDK family. It depends on Mg(2+) as a cofactor.

The catalysed reaction is a 2'-deoxyribonucleoside 5'-diphosphate + ATP = a 2'-deoxyribonucleoside 5'-triphosphate + ADP. The enzyme catalyses a ribonucleoside 5'-diphosphate + ATP = a ribonucleoside 5'-triphosphate + ADP. Major role in the synthesis of nucleoside triphosphates other than ATP. The ATP gamma phosphate is transferred to the NDP beta phosphate via a ping-pong mechanism, using a phosphorylated active-site intermediate. This chain is Nucleoside diphosphate kinase (NDK1), found in Encephalitozoon cuniculi (strain GB-M1) (Microsporidian parasite).